The following is a 332-amino-acid chain: C4-dicarboxylate-binding periplasmic protein DctP (332 aa).

Positions Met1–Ala22 are cleaved as a signal peptide.

Belongs to the bacterial solute-binding protein 7 family. The complex comprises the extracytoplasmic solute receptor protein DctP, and the two transmembrane proteins DctQ and DctM.

It localises to the periplasm. Part of the tripartite ATP-independent periplasmic (TRAP) transport system DctPQM involved in C4-dicarboxylates uptake. The polypeptide is C4-dicarboxylate-binding periplasmic protein DctP (Vibrio cholerae serotype O1 (strain ATCC 39315 / El Tor Inaba N16961)).